A 312-amino-acid chain; its full sequence is Ribonuclease HIII (312 aa).

Positions F95 to P311 constitute an RNase H type-2 domain. A divalent metal cation contacts are provided by D101, E102, and D206.

It belongs to the RNase HII family. RnhC subfamily. It depends on Mn(2+) as a cofactor. Requires Mg(2+) as cofactor.

It is found in the cytoplasm. The catalysed reaction is Endonucleolytic cleavage to 5'-phosphomonoester.. Endonuclease that specifically degrades the RNA of RNA-DNA hybrids. In Staphylococcus aureus (strain MW2), this protein is Ribonuclease HIII.